A 273-amino-acid chain; its full sequence is Dermonecrotic toxin LdSicTox-alphaIB1avi (273 aa).

His-5 is a catalytic residue. Mg(2+)-binding residues include Glu-25 and Asp-27. The active-site Nucleophile is His-41. Intrachain disulfides connect Cys-45–Cys-51 and Cys-47–Cys-190. Position 85 (Asp-85) interacts with Mg(2+). The N-linked (GlcNAc...) asparagine glycan is linked to Asn-250.

Belongs to the arthropod phospholipase D family. Class II subfamily. Mg(2+) is required as a cofactor. As to expression, expressed by the venom gland.

It is found in the secreted. It carries out the reaction an N-(acyl)-sphingosylphosphocholine = an N-(acyl)-sphingosyl-1,3-cyclic phosphate + choline. It catalyses the reaction an N-(acyl)-sphingosylphosphoethanolamine = an N-(acyl)-sphingosyl-1,3-cyclic phosphate + ethanolamine. The catalysed reaction is a 1-acyl-sn-glycero-3-phosphocholine = a 1-acyl-sn-glycero-2,3-cyclic phosphate + choline. The enzyme catalyses a 1-acyl-sn-glycero-3-phosphoethanolamine = a 1-acyl-sn-glycero-2,3-cyclic phosphate + ethanolamine. Its function is as follows. Dermonecrotic toxins cleave the phosphodiester linkage between the phosphate and headgroup of certain phospholipids (sphingolipid and lysolipid substrates), forming an alcohol (often choline) and a cyclic phosphate. This toxin acts on sphingomyelin (SM). It may also act on ceramide phosphoethanolamine (CPE), lysophosphatidylcholine (LPC) and lysophosphatidylethanolamine (LPE), but not on lysophosphatidylserine (LPS), and lysophosphatidylglycerol (LPG). It acts by transphosphatidylation, releasing exclusively cyclic phosphate products as second products. Induces dermonecrosis, hemolysis, increased vascular permeability, edema, inflammatory response, and platelet aggregation. In Loxosceles deserta (Desert recluse spider), this protein is Dermonecrotic toxin LdSicTox-alphaIB1avi.